The chain runs to 228 residues: Octanoyltransferase (228 aa).

A BPL/LPL catalytic domain is found at 37–217 (AGGPDTLLLL…AVCDALDGRL (181 aa)). Residues 75-82 (RGGKITWH), 147-149 (AIG), and 160-162 (GFA) contribute to the substrate site. Residue Cys178 is the Acyl-thioester intermediate of the active site.

It belongs to the LipB family.

It localises to the cytoplasm. It catalyses the reaction octanoyl-[ACP] + L-lysyl-[protein] = N(6)-octanoyl-L-lysyl-[protein] + holo-[ACP] + H(+). It functions in the pathway protein modification; protein lipoylation via endogenous pathway; protein N(6)-(lipoyl)lysine from octanoyl-[acyl-carrier-protein]: step 1/2. Catalyzes the transfer of endogenously produced octanoic acid from octanoyl-acyl-carrier-protein onto the lipoyl domains of lipoate-dependent enzymes. Lipoyl-ACP can also act as a substrate although octanoyl-ACP is likely to be the physiological substrate. The sequence is that of Octanoyltransferase from Mycolicibacterium smegmatis (strain ATCC 700084 / mc(2)155) (Mycobacterium smegmatis).